The primary structure comprises 138 residues: Endoribonuclease YbeY (138 aa).

Zn(2+)-binding residues include histidine 98, histidine 102, and histidine 108.

The protein belongs to the endoribonuclease YbeY family. Zn(2+) is required as a cofactor.

The protein resides in the cytoplasm. In terms of biological role, single strand-specific metallo-endoribonuclease involved in late-stage 70S ribosome quality control and in maturation of the 3' terminus of the 16S rRNA. This is Endoribonuclease YbeY from Thermosipho melanesiensis (strain DSM 12029 / CIP 104789 / BI429).